Here is a 122-residue protein sequence, read N- to C-terminus: Methylglyoxal synthase (122 aa).

Residues 1–122 form the MGS-like domain; it reads MRIALIAHDK…DLFIKHLKGK (122 aa). Residues His8, Lys12, 34-37, and 54-55 each bind substrate; these read TGTT and SG. Asp60 functions as the Proton donor/acceptor in the catalytic mechanism. Residue His87 participates in substrate binding.

Belongs to the methylglyoxal synthase family.

The enzyme catalyses dihydroxyacetone phosphate = methylglyoxal + phosphate. In terms of biological role, catalyzes the formation of methylglyoxal from dihydroxyacetone phosphate. This Acholeplasma laidlawii (strain PG-8A) protein is Methylglyoxal synthase.